The chain runs to 142 residues: Hemoglobin subunit alpha-A (142 aa).

Positions 2 to 142 (VLSAADKTNV…VGAVLTAKYR (141 aa)) constitute a Globin domain. H59 is an O2 binding site. H88 contacts heme b.

The protein belongs to the globin family. As to quaternary structure, heterotetramer of two alpha chains and two beta chains. In terms of tissue distribution, red blood cells.

Its function is as follows. Involved in oxygen transport from the lung to the various peripheral tissues. This is Hemoglobin subunit alpha-A (HBAA) from Cairina moschata (Muscovy duck).